A 491-amino-acid chain; its full sequence is N-succinylglutamate 5-semialdehyde dehydrogenase (491 aa).

Residue Gly225–Gly230 coordinates NAD(+). Catalysis depends on residues Glu248 and Cys282.

Belongs to the aldehyde dehydrogenase family. AstD subfamily.

It carries out the reaction N-succinyl-L-glutamate 5-semialdehyde + NAD(+) + H2O = N-succinyl-L-glutamate + NADH + 2 H(+). It functions in the pathway amino-acid degradation; L-arginine degradation via AST pathway; L-glutamate and succinate from L-arginine: step 4/5. Functionally, catalyzes the NAD-dependent reduction of succinylglutamate semialdehyde into succinylglutamate. In Marinobacter nauticus (strain ATCC 700491 / DSM 11845 / VT8) (Marinobacter aquaeolei), this protein is N-succinylglutamate 5-semialdehyde dehydrogenase.